Reading from the N-terminus, the 352-residue chain is Photosystem II D2 protein (352 aa).

A helical membrane pass occupies residues Cys40–Thr60. Position 117 (His117) interacts with chlorophyll a. The chain crosses the membrane as a helical span at residues Gly124 to Pro140. The pheophytin a site is built by Gln129 and Asn142. The chain crosses the membrane as a helical span at residues Val152–Ser165. His197 is a chlorophyll a binding site. Residues Gly207 to Glu227 form a helical membrane-spanning segment. 2 residues coordinate a plastoquinone: His214 and Phe261. A Fe cation-binding site is contributed by His214. His268 contributes to the Fe cation binding site. Residues Gly278–Arg294 traverse the membrane as a helical segment.

Belongs to the reaction center PufL/M/PsbA/D family. In terms of assembly, PSII is composed of 1 copy each of membrane proteins PsbA, PsbB, PsbC, PsbD, PsbE, PsbF, PsbH, PsbI, PsbJ, PsbK, PsbL, PsbM, PsbT, PsbX, PsbY, PsbZ, Psb30/Ycf12, peripheral proteins PsbO, CyanoQ (PsbQ), PsbU, PsbV and a large number of cofactors. It forms dimeric complexes. The cofactor is The D1/D2 heterodimer binds P680, chlorophylls that are the primary electron donor of PSII, and subsequent electron acceptors. It shares a non-heme iron and each subunit binds pheophytin, quinone, additional chlorophylls, carotenoids and lipids. There is also a Cl(-1) ion associated with D1 and D2, which is required for oxygen evolution. The PSII complex binds additional chlorophylls, carotenoids and specific lipids..

It localises to the cellular thylakoid membrane. The catalysed reaction is 2 a plastoquinone + 4 hnu + 2 H2O = 2 a plastoquinol + O2. Functionally, photosystem II (PSII) is a light-driven water:plastoquinone oxidoreductase that uses light energy to abstract electrons from H(2)O, generating O(2) and a proton gradient subsequently used for ATP formation. It consists of a core antenna complex that captures photons, and an electron transfer chain that converts photonic excitation into a charge separation. The D1/D2 (PsbA/PsbD) reaction center heterodimer binds P680, the primary electron donor of PSII as well as several subsequent electron acceptors. D2 is needed for assembly of a stable PSII complex. This is Photosystem II D2 protein from Trichodesmium erythraeum (strain IMS101).